A 20-amino-acid polypeptide reads, in one-letter code: Putative 60 kDa spermidine-binding protein (20 aa).

Residues 1–20 (SXAAVVEPPETSQNRIAKGE) are disordered. Polar residues predominate over residues 10-20 (ETSQNRIAKGE).

Dimer of 18 kDa and 60 kDa subunit.

Its subcellular location is the microsome membrane. It is found in the endoplasmic reticulum membrane. May have spermidine-binding activity. This chain is Putative 60 kDa spermidine-binding protein, found in Zea mays (Maize).